The following is a 148-amino-acid chain: Sperm-specific protein PHI-2B (148 aa).

Basic residues predominate over residues 1–35 (PSPSRRSRSRSRSRSKSPKRSPAKKARKTPKKRRA). Disordered regions lie at residues 1–44 (PSPS…KPST) and 97–148 (GVLV…KSNN). The 80-residue stretch at 40-119 (KKPSTLSMIV…GATGSFRVGK (80 aa)) folds into the H15 domain. The span at 124–148 (PKKKAKKAKSPKKKSSKKSSNKSNN) shows a compositional bias: basic residues.

Belongs to the histone H1/H5 family. As to expression, sperm.

It is found in the nucleus. Its subcellular location is the chromosome. Functionally, linker histones are implicated in chromatin remodeling and/or transcriptional regulation during spermiogenesis, the process of spermatid maturation into spermatozoa. This Mytilus californianus (California mussel) protein is Sperm-specific protein PHI-2B.